Here is a 691-residue protein sequence, read N- to C-terminus: DNA ligase (691 aa).

Residues 56–60, 104–105, and Glu139 contribute to the NAD(+) site; these read DRAYD and SI. Lys141 acts as the N6-AMP-lysine intermediate in catalysis. The NAD(+) site is built by Arg162, Glu198, Lys314, and Lys338. Positions 429, 432, 445, and 451 each coordinate Zn(2+). The BRCT domain occupies 607–691; sequence TAGDALSGQT…SLLESHGIEI (85 aa).

It belongs to the NAD-dependent DNA ligase family. LigA subfamily. Mg(2+) is required as a cofactor. It depends on Mn(2+) as a cofactor.

The enzyme catalyses NAD(+) + (deoxyribonucleotide)n-3'-hydroxyl + 5'-phospho-(deoxyribonucleotide)m = (deoxyribonucleotide)n+m + AMP + beta-nicotinamide D-nucleotide.. Functionally, DNA ligase that catalyzes the formation of phosphodiester linkages between 5'-phosphoryl and 3'-hydroxyl groups in double-stranded DNA using NAD as a coenzyme and as the energy source for the reaction. It is essential for DNA replication and repair of damaged DNA. This chain is DNA ligase, found in Natronomonas pharaonis (strain ATCC 35678 / DSM 2160 / CIP 103997 / JCM 8858 / NBRC 14720 / NCIMB 2260 / Gabara) (Halobacterium pharaonis).